The following is a 490-amino-acid chain: UDP-N-acetylmuramoyl-L-alanyl-D-glutamate--2,6-diaminopimelate ligase (490 aa).

UDP-N-acetyl-alpha-D-muramoyl-L-alanyl-D-glutamate-binding positions include Leu-22, Ser-24, and His-39–Thr-41. Gly-111–Thr-117 provides a ligand contact to ATP. UDP-N-acetyl-alpha-D-muramoyl-L-alanyl-D-glutamate-binding positions include Asn-152, Thr-153–Thr-154, Ser-180, Gln-186, and Arg-188. At Lys-220 the chain carries N6-carboxylysine. Residues Arg-385, Asp-409–Arg-412, Gly-460, and Glu-464 contribute to the meso-2,6-diaminopimelate site. The Meso-diaminopimelate recognition motif signature appears at Asp-409 to Arg-412.

Belongs to the MurCDEF family. MurE subfamily. The cofactor is Mg(2+). Post-translationally, carboxylation is probably crucial for Mg(2+) binding and, consequently, for the gamma-phosphate positioning of ATP.

The protein localises to the cytoplasm. The catalysed reaction is UDP-N-acetyl-alpha-D-muramoyl-L-alanyl-D-glutamate + meso-2,6-diaminopimelate + ATP = UDP-N-acetyl-alpha-D-muramoyl-L-alanyl-gamma-D-glutamyl-meso-2,6-diaminopimelate + ADP + phosphate + H(+). The protein operates within cell wall biogenesis; peptidoglycan biosynthesis. Catalyzes the addition of meso-diaminopimelic acid to the nucleotide precursor UDP-N-acetylmuramoyl-L-alanyl-D-glutamate (UMAG) in the biosynthesis of bacterial cell-wall peptidoglycan. The polypeptide is UDP-N-acetylmuramoyl-L-alanyl-D-glutamate--2,6-diaminopimelate ligase (Yersinia pestis).